Reading from the N-terminus, the 543-residue chain is CTP synthase (543 aa).

The amidoligase domain stretch occupies residues 1 to 265 (MARYIFITGG…DDEVLAAFAI (265 aa)). A CTP-binding site is contributed by S13. S13 is a UTP binding site. Residue 14-19 (SLGKGL) participates in ATP binding. Y54 lines the L-glutamine pocket. D71 is an ATP binding site. Mg(2+) is bound by residues D71 and E139. CTP-binding positions include 146–148 (DIE), 186–191 (KTKPTQ), and K222. UTP-binding positions include 186-191 (KTKPTQ) and K222. 238 to 240 (RDA) lines the ATP pocket. One can recognise a Glutamine amidotransferase type-1 domain in the interval 291–542 (TIAIVGKYTG…IEAALVRSRL (252 aa)). Residue G353 participates in L-glutamine binding. The Nucleophile; for glutamine hydrolysis role is filled by C380. Residues 381 to 384 (FGMQ), E404, and R470 each bind L-glutamine. Residues H515 and E517 contribute to the active site.

It belongs to the CTP synthase family. As to quaternary structure, homotetramer.

It catalyses the reaction UTP + L-glutamine + ATP + H2O = CTP + L-glutamate + ADP + phosphate + 2 H(+). It carries out the reaction L-glutamine + H2O = L-glutamate + NH4(+). The enzyme catalyses UTP + NH4(+) + ATP = CTP + ADP + phosphate + 2 H(+). It functions in the pathway pyrimidine metabolism; CTP biosynthesis via de novo pathway; CTP from UDP: step 2/2. Allosterically activated by GTP, when glutamine is the substrate; GTP has no effect on the reaction when ammonia is the substrate. The allosteric effector GTP functions by stabilizing the protein conformation that binds the tetrahedral intermediate(s) formed during glutamine hydrolysis. Inhibited by the product CTP, via allosteric rather than competitive inhibition. Catalyzes the ATP-dependent amination of UTP to CTP with either L-glutamine or ammonia as the source of nitrogen. Regulates intracellular CTP levels through interactions with the four ribonucleotide triphosphates. This chain is CTP synthase, found in Rhodopseudomonas palustris (strain BisB5).